Reading from the N-terminus, the 75-residue chain is UPF0352 protein PMI0824 (75 aa).

This sequence belongs to the UPF0352 family.

The protein is UPF0352 protein PMI0824 of Proteus mirabilis (strain HI4320).